The sequence spans 166 residues: Cofilin-2 (166 aa).

At Ala-2 the chain carries N-acetylalanine. Phosphoserine is present on Ser-3. Residues 4 to 153 (GVTVNDEVIK…KDRSTLGEKL (150 aa)) enclose the ADF-H domain. Phosphothreonine is present on Thr-6. A Nuclear localization signal motif is present at residues 30 to 34 (KKRKK).

This sequence belongs to the actin-binding proteins ADF family. As to quaternary structure, interacts with CSRP3; possibly two molecules of CFL2 can interact with one molecule if CSRP3. The phosphorylation of Ser-24 may prevent recognition of the nuclear localization signal. As to expression, predominantly expressed in skeletal muscle.

The protein resides in the nucleus matrix. It is found in the cytoplasm. It localises to the cytoskeleton. Its function is as follows. Controls reversibly actin polymerization and depolymerization in a pH-sensitive manner. It has the ability to bind G- and F-actin in a 1:1 ratio of cofilin to actin. It is the major component of intranuclear and cytoplasmic actin rods. Required for muscle maintenance. May play a role during the exchange of alpha-actin forms during the early postnatal remodeling of the sarcomere. This Mus musculus (Mouse) protein is Cofilin-2 (Cfl2).